Reading from the N-terminus, the 504-residue chain is Alpha-L-arabinofuranosidase C (504 aa).

N-linked (GlcNAc...) asparagine glycans are attached at residues asparagine 81, asparagine 152, asparagine 269, and asparagine 329.

It belongs to the glycosyl hydrolase 51 family.

It localises to the secreted. The catalysed reaction is Hydrolysis of terminal non-reducing alpha-L-arabinofuranoside residues in alpha-L-arabinosides.. It participates in glycan metabolism; L-arabinan degradation. In terms of biological role, alpha-L-arabinofuranosidase involved in the degradation of arabinoxylan, a major component of plant hemicellulose. Acts only on small linear 1,5-alpha-linked L-arabinofuranosyl oligosaccharides. This chain is Alpha-L-arabinofuranosidase C (abfC), found in Emericella nidulans (strain FGSC A4 / ATCC 38163 / CBS 112.46 / NRRL 194 / M139) (Aspergillus nidulans).